The primary structure comprises 187 residues: Thioredoxin F, chloroplastic (187 aa).

The N-terminal 72 residues, 1–72 (MALRLSVSSS…GSDTATVGAE (72 aa)), are a transit peptide targeting the chloroplast. The Thioredoxin domain occupies 73–186 (AEAVAVTGQV…LIQAIETVKS (114 aa)). Residues cysteine 111 and cysteine 114 each act as nucleophile in the active site. A disulfide bond links cysteine 111 and cysteine 114.

Belongs to the thioredoxin family. Plant F-type subfamily.

It is found in the plastid. It localises to the chloroplast. Thiol-disulfide oxidoreductase involved in the redox regulation of enzymes of both reductive pentose phosphate pathway (Calvin-Benson cycle) and oxidative pentose phosphate pathway. This is Thioredoxin F, chloroplastic from Oryza sativa subsp. japonica (Rice).